We begin with the raw amino-acid sequence, 272 residues long: Cytochrome b-c1 complex subunit Rieske, mitochondrial (272 aa).

Topologically, residues 77–104 are mitochondrial matrix; that stretch reads VHNDVTVPDFSAYRREDVMDATTSSQTS. Residues 105-138 form a helical membrane-spanning segment; it reads SEDRKGFSYLVTATACVATAYAAKNVVTQFISSL. At 139–272 the chain is on the mitochondrial intermembrane side; the sequence is SASADVLALS…FVGDDLVVVG (134 aa). Residues 185 to 270 form the Rieske domain; the sequence is EAEVDVSKLR…YQFVGDDLVV (86 aa). The [2Fe-2S] cluster site is built by Cys-215, His-217, Leu-218, Cys-234, His-237, and Ser-239. A disulfide bridge connects residues Cys-220 and Cys-236.

Belongs to the Rieske iron-sulfur protein family. As to quaternary structure, component of the ubiquinol-cytochrome c oxidoreductase (cytochrome b-c1 complex, complex III, CIII), a multisubunit enzyme composed of 11 subunits. The complex is composed of 3 respiratory subunits cytochrome b, cytochrome c1 and Rieske protein UQCRFS1, 2 core protein subunits UQCRC1/QCR1 and UQCRC2/QCR2, and 6 low-molecular weight protein subunits UQCRH/QCR6, UQCRB/QCR7, UQCRQ/QCR8, UQCR10/QCR9, UQCR11/QCR10 and subunit 9, the cleavage product of Rieske protein UQCRFS1. The complex exists as an obligatory dimer and forms supercomplexes (SCs) in the inner mitochondrial membrane with NADH-ubiquinone oxidoreductase (complex I, CI) and cytochrome c oxidase (complex IV, CIV), resulting in different assemblies (supercomplex SCI(1)III(2)IV(1) and megacomplex MCI(2)III(2)IV(2)). Incorporation of the Rieske protein UQCRFS1 is the penultimate step in complex III assembly. Interacts with TTC19, which is involved in the clearance of UQCRFS1 fragments. In terms of assembly, component of the ubiquinol-cytochrome c oxidoreductase (cytochrome b-c1 complex, complex III, CIII). Subunit 9 corresponds to the mitochondrial targeting sequence (MTS) of Rieske protein UQCRFS1. It is retained after processing and incorporated inside complex III, where it remains bound to the complex and localizes between the 2 core subunits UQCRC1/QCR1 and UQCRC2/QCR2. It depends on [2Fe-2S] cluster as a cofactor. Proteolytic processing is necessary for the correct insertion of UQCRFS1 in the complex III dimer. Several fragments are generated during UQCRFS1 insertion, most probably due to the endogenous matrix-processing peptidase (MPP) activity of the 2 core protein subunits UQCRC1/QCR1 and UQCRC2/QCR2, which are homologous to the 2 mitochondrial-processing peptidase (MPP) subunits beta-MPP and alpha-MPP respectively. The action of the protease is also necessary for the clearance of the UQCRFS1 fragments.

It localises to the mitochondrion inner membrane. It carries out the reaction a quinol + 2 Fe(III)-[cytochrome c](out) = a quinone + 2 Fe(II)-[cytochrome c](out) + 2 H(+)(out). Component of the ubiquinol-cytochrome c oxidoreductase, a multisubunit transmembrane complex that is part of the mitochondrial electron transport chain which drives oxidative phosphorylation. The respiratory chain contains 3 multisubunit complexes succinate dehydrogenase (complex II, CII), ubiquinol-cytochrome c oxidoreductase (cytochrome b-c1 complex, complex III, CIII) and cytochrome c oxidase (complex IV, CIV), that cooperate to transfer electrons derived from NADH and succinate to molecular oxygen, creating an electrochemical gradient over the inner membrane that drives transmembrane transport and the ATP synthase. The cytochrome b-c1 complex catalyzes electron transfer from ubiquinol to cytochrome c, linking this redox reaction to translocation of protons across the mitochondrial inner membrane, with protons being carried across the membrane as hydrogens on the quinol. In the process called Q cycle, 2 protons are consumed from the matrix, 4 protons are released into the intermembrane space and 2 electrons are passed to cytochrome c. The Rieske protein is a catalytic core subunit containing a [2Fe-2S] iron-sulfur cluster. It cycles between 2 conformational states during catalysis to transfer electrons from the quinol bound in the Q(0) site in cytochrome b to cytochrome c1. Incorporation of UQCRFS1 is the penultimate step in complex III assembly. Functionally, component of the ubiquinol-cytochrome c oxidoreductase (cytochrome b-c1 complex, complex III, CIII). UQCRFS1 undergoes proteolytic processing once it is incorporated in the complex III dimer. One of the fragments, called subunit 9, corresponds to its mitochondrial targeting sequence (MTS). The proteolytic processing is necessary for the correct insertion of UQCRFS1 in the complex III dimer, but the persistence of UQCRFS1-derived fragments may prevent newly imported UQCRFS1 to be processed and assembled into complex III and is detrimental for the complex III structure and function. The chain is Cytochrome b-c1 complex subunit Rieske, mitochondrial (UQCRFS1) from Gallus gallus (Chicken).